The chain runs to 258 residues: 5'-nucleotidase SurE (258 aa).

Aspartate 10, aspartate 11, serine 41, and asparagine 96 together coordinate a divalent metal cation.

This sequence belongs to the SurE nucleotidase family. A divalent metal cation serves as cofactor.

Its subcellular location is the cytoplasm. It carries out the reaction a ribonucleoside 5'-phosphate + H2O = a ribonucleoside + phosphate. Functionally, nucleotidase that shows phosphatase activity on nucleoside 5'-monophosphates. This chain is 5'-nucleotidase SurE, found in Sorangium cellulosum (strain So ce56) (Polyangium cellulosum (strain So ce56)).